A 91-amino-acid chain; its full sequence is Small ribosomal subunit protein uS19 (91 aa).

Belongs to the universal ribosomal protein uS19 family.

Functionally, protein S19 forms a complex with S13 that binds strongly to the 16S ribosomal RNA. In Leptothrix cholodnii (strain ATCC 51168 / LMG 8142 / SP-6) (Leptothrix discophora (strain SP-6)), this protein is Small ribosomal subunit protein uS19.